Consider the following 328-residue polypeptide: GTP 3',8-cyclase (328 aa).

Positions Met1–Ala229 constitute a Radical SAM core domain. Residue Arg8 participates in GTP binding. [4Fe-4S] cluster is bound by residues Cys15 and Cys19. Residue Tyr21 participates in S-adenosyl-L-methionine binding. Cys22 is a binding site for [4Fe-4S] cluster. Residue Arg60 coordinates GTP. Gly64 is an S-adenosyl-L-methionine binding site. Thr91 provides a ligand contact to GTP. Ser115 is an S-adenosyl-L-methionine binding site. Lys155 contacts GTP. Position 189 (Met189) interacts with S-adenosyl-L-methionine. [4Fe-4S] cluster is bound by residues Cys252 and Cys255. A GTP-binding site is contributed by Arg257–Arg259. A [4Fe-4S] cluster-binding site is contributed by Cys269.

This sequence belongs to the radical SAM superfamily. MoaA family. Monomer and homodimer. Requires [4Fe-4S] cluster as cofactor.

The enzyme catalyses GTP + AH2 + S-adenosyl-L-methionine = (8S)-3',8-cyclo-7,8-dihydroguanosine 5'-triphosphate + 5'-deoxyadenosine + L-methionine + A + H(+). It functions in the pathway cofactor biosynthesis; molybdopterin biosynthesis. Functionally, catalyzes the cyclization of GTP to (8S)-3',8-cyclo-7,8-dihydroguanosine 5'-triphosphate. The protein is GTP 3',8-cyclase of Trichodesmium erythraeum (strain IMS101).